Reading from the N-terminus, the 331-residue chain is 6-phosphogluconolactonase (331 aa).

This sequence belongs to the cycloisomerase 2 family.

It carries out the reaction 6-phospho-D-glucono-1,5-lactone + H2O = 6-phospho-D-gluconate + H(+). It functions in the pathway carbohydrate degradation; pentose phosphate pathway; D-ribulose 5-phosphate from D-glucose 6-phosphate (oxidative stage): step 2/3. Catalyzes the hydrolysis of 6-phosphogluconolactone to 6-phosphogluconate. In Salmonella choleraesuis (strain SC-B67), this protein is 6-phosphogluconolactonase.